Consider the following 406-residue polypeptide: Multifunctional CCA protein (406 aa).

Glycine 8 and arginine 11 together coordinate ATP. Residues glycine 8 and arginine 11 each contribute to the CTP site. Mg(2+) contacts are provided by aspartate 21 and aspartate 23. Residues arginine 91, arginine 137, and arginine 140 each coordinate ATP. CTP-binding residues include arginine 91, arginine 137, and arginine 140. The HD domain occupies 228-329 (TGIHTLMVAQ…IKILNKFDVW (102 aa)).

It belongs to the tRNA nucleotidyltransferase/poly(A) polymerase family. Bacterial CCA-adding enzyme type 1 subfamily. As to quaternary structure, monomer. Can also form homodimers and oligomers. The cofactor is Mg(2+). Requires Ni(2+) as cofactor.

It catalyses the reaction a tRNA precursor + 2 CTP + ATP = a tRNA with a 3' CCA end + 3 diphosphate. The enzyme catalyses a tRNA with a 3' CCA end + 2 CTP + ATP = a tRNA with a 3' CCACCA end + 3 diphosphate. In terms of biological role, catalyzes the addition and repair of the essential 3'-terminal CCA sequence in tRNAs without using a nucleic acid template. Adds these three nucleotides in the order of C, C, and A to the tRNA nucleotide-73, using CTP and ATP as substrates and producing inorganic pyrophosphate. tRNA 3'-terminal CCA addition is required both for tRNA processing and repair. Also involved in tRNA surveillance by mediating tandem CCA addition to generate a CCACCA at the 3' terminus of unstable tRNAs. While stable tRNAs receive only 3'-terminal CCA, unstable tRNAs are marked with CCACCA and rapidly degraded. The polypeptide is Multifunctional CCA protein (Vibrio campbellii (strain ATCC BAA-1116)).